Reading from the N-terminus, the 870-residue chain is Ubiquitin-protein ligase E3A (870 aa).

Ser8 is subject to Phosphoserine. The C4-type; atypical zinc-finger motif lies at Cys42 to Cys81. Over residues Glu171–Asp180 the composition is skewed to basic and acidic residues. The segment at Glu171–Gly223 is disordered. Positions Arg208–Gln220 are enriched in polar residues. Ser213 bears the Phosphoserine mark. In terms of domain architecture, HECT spans Asn542–Leu870. Phosphotyrosine; by ABL1 is present on Tyr654. Catalysis depends on Cys838, which acts as the Glycyl thioester intermediate.

As to quaternary structure, the active form is probably a homotrimer. Binds UBQLN1 and UBQLN2. Interacts with the 26S proteasome. Interacts with BPY2. Interacts with HIF1AN, MAPK6 and NEURL4; interaction with MAPK6 may be mediated by NEURL4. Interacts with the proteasomal subunit PSMD4. Interacts with BMAL1. Interacts with ARC. Interacts with ESR1 and WBP2. In terms of processing, phosphorylation at Tyr-654 by ABL1 impairs E3 ligase activity. Widely expressed. Most abundant in brain, heart and thymus.

It is found in the cytoplasm. It localises to the nucleus. The enzyme catalyses S-ubiquitinyl-[E2 ubiquitin-conjugating enzyme]-L-cysteine + [acceptor protein]-L-lysine = [E2 ubiquitin-conjugating enzyme]-L-cysteine + N(6)-ubiquitinyl-[acceptor protein]-L-lysine.. It participates in protein modification; protein ubiquitination. E3 ubiquitin-protein ligase which accepts ubiquitin from an E2 ubiquitin-conjugating enzyme in the form of a thioester and transfers it to its substrates. Several substrates have been identified including the BMAL1, ARC, LAMTOR1, RAD23A and RAD23B, MCM7 (which is involved in DNA replication), annexin A1, the PML tumor suppressor, and the cell cycle regulator CDKN1B. Additionally, may function as a cellular quality control ubiquitin ligase by helping the degradation of the cytoplasmic misfolded proteins. Finally, UBE3A also promotes its own degradation in vivo. Plays an important role in the regulation of the circadian clock: involved in the ubiquitination of the core clock component BMAL1, leading to its proteasomal degradation. Acts as a regulator of synaptic development by mediating ubiquitination and degradation of ARC. Required for synaptic remodeling in neurons by mediating ubiquitination and degradation of LAMTOR1, thereby limiting mTORC1 signaling and activity-dependent synaptic remodeling. Synergizes with WBP2 in enhancing PGR activity. This Mus musculus (Mouse) protein is Ubiquitin-protein ligase E3A.